A 325-amino-acid polypeptide reads, in one-letter code: Beta-ketoacyl-[acyl-carrier-protein] synthase III (325 aa).

Catalysis depends on residues Cys-112 and His-250. The tract at residues 251-255 (QANSR) is ACP-binding. Asn-280 is an active-site residue.

Belongs to the thiolase-like superfamily. FabH family. As to quaternary structure, homodimer.

It is found in the cytoplasm. It catalyses the reaction malonyl-[ACP] + acetyl-CoA + H(+) = 3-oxobutanoyl-[ACP] + CO2 + CoA. The protein operates within lipid metabolism; fatty acid biosynthesis. Catalyzes the condensation reaction of fatty acid synthesis by the addition to an acyl acceptor of two carbons from malonyl-ACP. Catalyzes the first condensation reaction which initiates fatty acid synthesis and may therefore play a role in governing the total rate of fatty acid production. Possesses both acetoacetyl-ACP synthase and acetyl transacylase activities. Its substrate specificity determines the biosynthesis of branched-chain and/or straight-chain of fatty acids. The protein is Beta-ketoacyl-[acyl-carrier-protein] synthase III of Lactococcus lactis subsp. lactis (strain IL1403) (Streptococcus lactis).